A 169-amino-acid polypeptide reads, in one-letter code: Ureidoglycolate lyase (169 aa).

This sequence belongs to the ureidoglycolate lyase family. In terms of assembly, homodimer. Requires Ni(2+) as cofactor.

It catalyses the reaction (S)-ureidoglycolate = urea + glyoxylate. Its pathway is nitrogen metabolism; (S)-allantoin degradation. Its function is as follows. Catalyzes the catabolism of the allantoin degradation intermediate (S)-ureidoglycolate, generating urea and glyoxylate. Involved in the utilization of allantoin as nitrogen source. This Brucella abortus biovar 1 (strain 9-941) protein is Ureidoglycolate lyase.